Consider the following 508-residue polypeptide: MSMSSIPSSSQSGKLYGWVERIGNKVPHPFLLFIYLIIVLMVTTAILSAFGVSAKNPTDGTPVVVKNLLSVEGLHWFLPNVIKNFSGFAPLGAILALVLGAGLAERVGLLPALMVKMASHVNARYASYMVLFIAFFSHISSDAALVIMPPMGALIFLAVGRHPVAGLLAAIAGVGCGFTANLLIVTTDVLLSGISTEAAAAFNPQMHVSVIDNWYFMASSVVVLTIVGGLITDKIIEPRLGQWQGNSDEKLQTLTESQRFGLRIAGVVSLLFIAAIALMVIPQNGILRDPINHTVMPSPFIKGIVPLIILFFFVVSLAYGIATRTIRRQADLPHLMIEPMKEMAGFIVMVFPLAQFVAMFNWSNMGKFIAVGLTDILESSGLSGIPAFVGLALLSSFLCMFIASGSAIWSILAPIFVPMFMLLGFHPAFAQILFRIADSSVLPLAPVSPFVPLFLGFLQRYKPDAKLGTYYSLVLPYPLIFLVVWLLMLLAWYLVGLPIGPGIYPRLS.

The next 13 helical transmembrane spans lie at 30-50 (FLLFIYLIIVLMVTTAILSAF), 85-105 (FSGFAPLGAILALVLGAGLAE), 121-139 (VNARYASYMVLFIAFFSHI), 140-159 (SSDAALVIMPPMGALIFLAV), 164-184 (VAGLLAAIAGVGCGFTANLLI), 211-231 (IDNWYFMASSVVVLTIVGGLI), 261-281 (GLRIAGVVSLLFIAAIALMVI), 303-323 (GIVPLIILFFFVVSLAYGIAT), 343-363 (MAGFIVMVFPLAQFVAMFNWS), 382-402 (LSGIPAFVGLALLSSFLCMFI), 405-425 (GSAIWSILAPIFVPMFMLLGF), 439-459 (SSVLPLAPVSPFVPLFLGFLQ), and 479-499 (LIFLVVWLLMLLAWYLVGLPI).

It localises to the cell inner membrane. It catalyses the reaction N-(4-aminobenzoyl)-L-glutamate(in) + H(+)(in) = N-(4-aminobenzoyl)-L-glutamate(out) + H(+)(out). Its activity is regulated as follows. Completely inhibited by 100 nM sodium azide and by the proton ionophore carbonyl cyanide m-chlorophenylhydrazone (CCCP). Is also strongly inhibited by 100 mM potassium fluoride. Its function is as follows. Essential for aminobenzoyl-glutamate utilization. It catalyzes the concentration-dependent uptake of p-aminobenzoyl-glutamate (PABA-GLU) into the cell and allows accumulation of PABA-GLU to a concentration enabling AbgAB to catalyze cleavage into p-aminobenzoate and glutamate. It also seems to increase the sensitivity to low levels of aminobenzoyl-glutamate. May actually serve physiologically as a transporter for some other molecule, perhaps a dipeptide, and that it transports p-aminobenzoyl-glutamate as a secondary activity. The physiological role of abgABT should be clarified. This is p-aminobenzoyl-glutamate transport protein from Escherichia coli (strain K12).